Here is a 226-residue protein sequence, read N- to C-terminus: MVSVAFKQNLKKKYGIKFNNEKLLEDAFTHSSYANEHPGRKDYEKLEFLGDAVLELAVSDYLYRHFPRLNEGELTRMRSNIVRTEGFSEFAIECGFPEEINLGKGEEKAGARKRKTLLEDVFEAFNGALFLDQGMPAVQHFLHLTVYPLIAEGDFNASRDYKTELQERLQVNGPVKIEYQVISEDESKPSFKVQLLVNGEKVSEGQGRNKKAAEQQAAQAALDKNK.

An RNase III domain is found at 7–134 (KQNLKKKYGI…FNGALFLDQG (128 aa)). E47 lines the Mg(2+) pocket. The active site involves D51. Residues D120 and E123 each coordinate Mg(2+). The active site involves E123. Positions 160–226 (DYKTELQERL…AAQAALDKNK (67 aa)) constitute a DRBM domain. The segment at 201–226 (KVSEGQGRNKKAAEQQAAQAALDKNK) is disordered. Positions 214-226 (EQQAAQAALDKNK) are enriched in low complexity.

Belongs to the ribonuclease III family. In terms of assembly, homodimer. Mg(2+) serves as cofactor.

The protein resides in the cytoplasm. It carries out the reaction Endonucleolytic cleavage to 5'-phosphomonoester.. In terms of biological role, digests double-stranded RNA. Involved in the processing of primary rRNA transcript to yield the immediate precursors to the large and small rRNAs (23S and 16S). Processes some mRNAs, and tRNAs when they are encoded in the rRNA operon. Processes pre-crRNA and tracrRNA of type II CRISPR loci if present in the organism. The polypeptide is Ribonuclease 3 (Lactobacillus johnsonii (strain CNCM I-12250 / La1 / NCC 533)).